The following is a 396-amino-acid chain: Elongation factor Tu (396 aa).

The region spanning 10 to 206 (KPHVNIGTIG…ACDTYIPAPV (197 aa)) is the tr-type G domain. Residues 19–26 (GHVDHGKT) are G1. Residue 19-26 (GHVDHGKT) coordinates GTP. Thr-26 serves as a coordination point for Mg(2+). Residues 60-64 (GITIS) are G2. Residues 81-84 (DCPG) form a G3 region. GTP is bound by residues 81–85 (DCPGH) and 136–139 (NKVD). Positions 136–139 (NKVD) are G4. Residues 174-176 (SAL) are G5.

The protein belongs to the TRAFAC class translation factor GTPase superfamily. Classic translation factor GTPase family. EF-Tu/EF-1A subfamily. As to quaternary structure, monomer.

It localises to the cytoplasm. It carries out the reaction GTP + H2O = GDP + phosphate + H(+). Its function is as follows. GTP hydrolase that promotes the GTP-dependent binding of aminoacyl-tRNA to the A-site of ribosomes during protein biosynthesis. This chain is Elongation factor Tu, found in Bdellovibrio bacteriovorus (strain ATCC 15356 / DSM 50701 / NCIMB 9529 / HD100).